The chain runs to 122 residues: Protein FAM223A (122 aa).

It belongs to the FAM223 family.

The chain is Protein FAM223A (FAM223A) from Homo sapiens (Human).